The following is a 179-amino-acid chain: Chymotrypsin inhibitor ECI (179 aa).

Q1 bears the Pyrrolidone carboxylic acid mark. 2 cysteine pairs are disulfide-bonded: C40–C84 and C134–C143.

The protein belongs to the protease inhibitor I3 (leguminous Kunitz-type inhibitor) family.

In terms of biological role, inhibition of chymotrypsin. The protein is Chymotrypsin inhibitor ECI of Erythrina variegata (Indian coral tree).